The chain runs to 457 residues: tRNA-2-methylthio-N(6)-dimethylallyladenosine synthase (457 aa).

The MTTase N-terminal domain occupies 3–120 (KKVYIKTFGC…LPQMIDQRRA (118 aa)). Positions 12, 49, 83, 157, 161, and 164 each coordinate [4Fe-4S] cluster. The region spanning 143-377 (RVEGPSAFVS…QATIEENVAR (235 aa)) is the Radical SAM core domain. Residues 380-447 (RSMVGKVERI…PHSLRGELLL (68 aa)) enclose the TRAM domain.

This sequence belongs to the methylthiotransferase family. MiaB subfamily. As to quaternary structure, monomer. [4Fe-4S] cluster is required as a cofactor.

Its subcellular location is the cytoplasm. The enzyme catalyses N(6)-dimethylallyladenosine(37) in tRNA + (sulfur carrier)-SH + AH2 + 2 S-adenosyl-L-methionine = 2-methylsulfanyl-N(6)-dimethylallyladenosine(37) in tRNA + (sulfur carrier)-H + 5'-deoxyadenosine + L-methionine + A + S-adenosyl-L-homocysteine + 2 H(+). Functionally, catalyzes the methylthiolation of N6-(dimethylallyl)adenosine (i(6)A), leading to the formation of 2-methylthio-N6-(dimethylallyl)adenosine (ms(2)i(6)A) at position 37 in tRNAs that read codons beginning with uridine. This chain is tRNA-2-methylthio-N(6)-dimethylallyladenosine synthase, found in Burkholderia ambifaria (strain MC40-6).